We begin with the raw amino-acid sequence, 289 residues long: ATP synthase subunit a (289 aa).

The next 6 membrane-spanning stretches (helical) occupy residues 43–63 (AFHL…LLIF), 104–124 (IAPL…VDLI), 160–180 (FCVF…GGFI), 193–213 (IFVQ…TLIA), 232–252 (VFIL…GLGV), and 259–279 (AVFH…LTIV).

Belongs to the ATPase A chain family. In terms of assembly, F-type ATPases have 2 components, CF(1) - the catalytic core - and CF(0) - the membrane proton channel. CF(1) has five subunits: alpha(3), beta(3), gamma(1), delta(1), epsilon(1). CF(0) has three main subunits: a(1), b(2) and c(9-12). The alpha and beta chains form an alternating ring which encloses part of the gamma chain. CF(1) is attached to CF(0) by a central stalk formed by the gamma and epsilon chains, while a peripheral stalk is formed by the delta and b chains.

Its subcellular location is the cell inner membrane. In terms of biological role, key component of the proton channel; it plays a direct role in the translocation of protons across the membrane. In Pseudomonas putida (strain ATCC 47054 / DSM 6125 / CFBP 8728 / NCIMB 11950 / KT2440), this protein is ATP synthase subunit a.